The sequence spans 433 residues: Glutamate-1-semialdehyde 2,1-aminomutase (433 aa).

Position 272 is an N6-(pyridoxal phosphate)lysine (Lys272).

Belongs to the class-III pyridoxal-phosphate-dependent aminotransferase family. HemL subfamily. As to quaternary structure, homodimer. Requires pyridoxal 5'-phosphate as cofactor.

The protein resides in the cytoplasm. The catalysed reaction is (S)-4-amino-5-oxopentanoate = 5-aminolevulinate. It functions in the pathway porphyrin-containing compound metabolism; protoporphyrin-IX biosynthesis; 5-aminolevulinate from L-glutamyl-tRNA(Glu): step 2/2. Its pathway is porphyrin-containing compound metabolism; chlorophyll biosynthesis. This is Glutamate-1-semialdehyde 2,1-aminomutase from Synechococcus sp. (strain WH7803).